We begin with the raw amino-acid sequence, 247 residues long: Acidic 27 kDa endochitinase (247 aa).

The N-terminal stretch at 1-16 (MVLCCVFLLFLTGSFA) is a signal peptide. Catalysis depends on Glu-84, which acts as the Proton donor. Cys-206 and Cys-238 form a disulfide bridge.

The protein belongs to the glycosyl hydrolase 19 family. Chitinase class II subfamily.

Its subcellular location is the secreted. The protein localises to the extracellular space. It catalyses the reaction Random endo-hydrolysis of N-acetyl-beta-D-glucosaminide (1-&gt;4)-beta-linkages in chitin and chitodextrins.. Its function is as follows. Defense against chitin-containing fungal pathogens. In Solanum lycopersicum (Tomato), this protein is Acidic 27 kDa endochitinase (CHI17).